A 290-amino-acid polypeptide reads, in one-letter code: ADP-ribosylation factor-like protein 13A (290 aa).

Residues 28 to 35 (GLNNSGKT), 71 to 75 (DLNGD), and 130 to 133 (NKQD) each bind GTP. The tract at residues 204-226 (SKNNTGSGERCSSHSFSTRTGMS) is disordered.

This sequence belongs to the small GTPase superfamily. Arf family.

The sequence is that of ADP-ribosylation factor-like protein 13A (ARL13A) from Homo sapiens (Human).